We begin with the raw amino-acid sequence, 205 residues long: Urease accessory protein UreE (205 aa).

The span at 171-192 shows a compositional bias: basic and acidic residues; it reads HHGHSHSHDHDHDHDHDHDHQH. The interval 171-205 is disordered; that stretch reads HHGHSHSHDHDHDHDHDHDHQHGPCCSHGHHHGHR.

It belongs to the UreE family.

It localises to the cytoplasm. In terms of biological role, involved in urease metallocenter assembly. Binds nickel. Probably functions as a nickel donor during metallocenter assembly. This Burkholderia pseudomallei (strain K96243) protein is Urease accessory protein UreE.